The following is a 201-amino-acid chain: Dermatopontin (201 aa).

Residues 1–18 (MDLSLLWVLLPLVTMAWG) form the signal peptide. A Pyrrolidone carboxylic acid modification is found at glutamine 19. Tyrosine 23 is subject to Sulfotyrosine. 4 consecutive repeat copies span residues 26-79 (PYQQ…ACMP), 70-75 (DRQWNY), 80-135 (TPQS…CCRY), and 125-130 (DREWQF). Residues 26-186 (PYQQYHDYSD…AVERDRQWKF (161 aa)) are 2 X 53-55 AA tandem repeats. 5 disulfides stabilise this stretch: cysteine 50-cysteine 77, cysteine 90-cysteine 132, cysteine 106-cysteine 133, cysteine 139-cysteine 196, and cysteine 143-cysteine 189. Positions 70-186 (DRQWNYACMP…AVERDRQWKF (117 aa)) are 3 X 6 AA repeats of D-R-[EQ]-W-[NQK]-[FY]. Residues tyrosine 162, tyrosine 164, tyrosine 166, and tyrosine 167 each carry the sulfotyrosine modification. Residues 181 to 186 (DRQWKF) form a 3-3 repeat. Sulfotyrosine is present on tyrosine 194.

The protein belongs to the dermatopontin family. In terms of assembly, interacts with TGFB1, DCN and collagen. In terms of processing, sulfated on tyrosine residue(s). As to expression, expressed in fibroblasts, heart, skeletal muscle, brain and pancreas. Expressed at an intermediate level in lung and kidney, and at a low level in liver and placenta. Expressed at a lower level in fibroblasts from hypertrophic scar lesional skin and in fibroblasts from patients with systemic sclerosis than in normal skin fibroblasts.

The protein resides in the secreted. It is found in the extracellular space. Its subcellular location is the extracellular matrix. Functionally, seems to mediate adhesion by cell surface integrin binding. May serve as a communication link between the dermal fibroblast cell surface and its extracellular matrix environment. Enhances TGFB1 activity. Inhibits cell proliferation. Accelerates collagen fibril formation, and stabilizes collagen fibrils against low-temperature dissociation. This is Dermatopontin (DPT) from Homo sapiens (Human).